The following is a 165-amino-acid chain: Calcium-binding protein H (165 aa).

4 consecutive EF-hand domains span residues 7 to 42 (QIEK…MGSK), 43 to 78 (YPEK…RYQD), 88 to 123 (YFQD…IGSD), and 124 to 159 (HPKE…TIRS). Ca(2+) is bound by residues D20, D22, N24, E26, E31, D56, D58, E60, K62, E67, D101, N103, D105, R107, E112, D137, N139, D141, Y143, and E148.

The polypeptide is Calcium-binding protein H (cbpH) (Dictyostelium discoideum (Social amoeba)).